Here is a 278-residue protein sequence, read N- to C-terminus: Indole-3-glycerol phosphate synthase (278 aa).

Belongs to the TrpC family.

It catalyses the reaction 1-(2-carboxyphenylamino)-1-deoxy-D-ribulose 5-phosphate + H(+) = (1S,2R)-1-C-(indol-3-yl)glycerol 3-phosphate + CO2 + H2O. It participates in amino-acid biosynthesis; L-tryptophan biosynthesis; L-tryptophan from chorismate: step 4/5. The protein is Indole-3-glycerol phosphate synthase of Pseudomonas aeruginosa (strain LESB58).